Here is a 445-residue protein sequence, read N- to C-terminus: Adenine permease AdeP (445 aa).

At 1 to 28 the chain is on the cytoplasmic side; the sequence is MSHQHTTQTSGQGMLERVFKLREHGTTA. A helical membrane pass occupies residues 29-52; the sequence is RTEVIAGFTTFLTMVYIVFVNPQI. Over 53–62 the chain is Periplasmic; it reads LGVAGMDTSA. A helical membrane pass occupies residues 63 to 81; that stretch reads VFVTTCLIAAFGSIMMGLF. Over 82-83 the chain is Cytoplasmic; sequence AN. Residues 84–100 traverse the membrane as a discontinuously helical segment; the sequence is LPVALAPAMGLNAFFAF. At 101 to 112 the chain is on the periplasmic side; sequence VVVQAMGLPWQV. Residues 113 to 132 form a helical membrane-spanning segment; sequence GMGAIFWGAIGLLLLTIFRV. Residues 133-144 lie on the Cytoplasmic side of the membrane; it reads RYWMIANIPVSL. A helical transmembrane segment spans residues 145–165; it reads RVGITSGIGLFIGMMGLKNAG. Over 166 to 181 the chain is Periplasmic; that stretch reads VIVANPETLVSIGNLT. The helical transmembrane segment at 182 to 199 threads the bilayer; the sequence is SHSVLLGILGFFIIAILA. The Cytoplasmic segment spans residues 200–203; it reads SRNI. Residues 204 to 222 form a helical membrane-spanning segment; sequence HAAVLVSIVVTTLLGWMLG. The Periplasmic segment spans residues 223–250; sequence DVHYNGIVSAPPSVMTVVGHVDLAGSFN. A helical membrane pass occupies residues 251–279; the sequence is LGLAGVIFSFMLVNLFDSSGTLIGVTDKA. Residues 280–292 lie on the Cytoplasmic side of the membrane; that stretch reads GLADEKGKFPRMK. The chain crosses the membrane as a helical span at residues 293-308; it reads QALYVDSISSVTGSFI. Topologically, residues 309–310 are periplasmic; that stretch reads GT. A discontinuously helical membrane pass occupies residues 311 to 326; sequence SSVTAYIESSSGVSVG. At 327–330 the chain is on the cytoplasmic side; that stretch reads GRTG. The chain crosses the membrane as a helical span at residues 331-345; it reads LTAVVVGLLFLLVIF. At 346 to 356 the chain is on the periplasmic side; sequence LSPLAGMVPGY. Residues 357–376 traverse the membrane as a helical segment; sequence AAAGALIYVGVLMTSSLARV. Over 377-381 the chain is Cytoplasmic; the sequence is NWQDL. The discontinuously helical intramembrane region spans 382–417; sequence TESVPAFITAVMMPFSFSITEGIALGFISYCVMKIG. Residues 418-445 lie on the Cytoplasmic side of the membrane; the sequence is TGRLRDLSPCVIIVALLFILKIVFIDAH.

It belongs to the nucleobase:cation symporter-2 (NCS2) (TC 2.A.40) family. Azg-like subfamily.

Its subcellular location is the cell inner membrane. With respect to regulation, internal adenine may inhibit transport. Functionally, high-affinity transporter for adenine. This is Adenine permease AdeP (adeP) from Escherichia coli (strain K12).